The primary structure comprises 106 residues: L-rhamnose mutarotase (106 aa).

Y20 contributes to the substrate binding site. Catalysis depends on H24, which acts as the Proton donor. Substrate is bound by residues Y43 and 78 to 79 (WW).

Belongs to the rhamnose mutarotase family. Homodimer.

The protein localises to the cytoplasm. It catalyses the reaction alpha-L-rhamnose = beta-L-rhamnose. It participates in carbohydrate metabolism; L-rhamnose metabolism. In terms of biological role, involved in the anomeric conversion of L-rhamnose. This chain is L-rhamnose mutarotase, found in Rhizobium etli (strain ATCC 51251 / DSM 11541 / JCM 21823 / NBRC 15573 / CFN 42).